A 231-amino-acid chain; its full sequence is 2-C-methyl-D-erythritol 4-phosphate cytidylyltransferase (231 aa).

This sequence belongs to the IspD/TarI cytidylyltransferase family. IspD subfamily.

The enzyme catalyses 2-C-methyl-D-erythritol 4-phosphate + CTP + H(+) = 4-CDP-2-C-methyl-D-erythritol + diphosphate. It functions in the pathway isoprenoid biosynthesis; isopentenyl diphosphate biosynthesis via DXP pathway; isopentenyl diphosphate from 1-deoxy-D-xylulose 5-phosphate: step 2/6. Its function is as follows. Catalyzes the formation of 4-diphosphocytidyl-2-C-methyl-D-erythritol from CTP and 2-C-methyl-D-erythritol 4-phosphate (MEP). The polypeptide is 2-C-methyl-D-erythritol 4-phosphate cytidylyltransferase (Dictyoglomus thermophilum (strain ATCC 35947 / DSM 3960 / H-6-12)).